A 60-amino-acid chain; its full sequence is Probable UDP-arabinopyranose mutase 1 (60 aa).

The protein belongs to the RGP family. Homopentamer or homohexamer. Requires Mn(2+) as cofactor. The cofactor is Mg(2+).

It localises to the secreted. The protein resides in the cell wall. It is found in the cell junction. The protein localises to the plasmodesma. Its subcellular location is the golgi apparatus. It catalyses the reaction UDP-beta-L-arabinofuranose = UDP-beta-L-arabinopyranose. Functionally, probable UDP-L-arabinose mutase involved in the biosynthesis of cell wall non-cellulosic polysaccharides. The sequence is that of Probable UDP-arabinopyranose mutase 1 from Phoenix dactylifera (Date palm).